The following is a 347-amino-acid chain: uncharacterized protein (347 aa).

Zn(2+) contacts are provided by Cys39, His65, Cys95, Cys98, Cys101, Cys109, and Glu152.

It belongs to the zinc-containing alcohol dehydrogenase family. Zn(2+) is required as a cofactor.

This is an uncharacterized protein from Escherichia coli (strain K12).